The primary structure comprises 182 residues: ATP-dependent protease subunit HslV (182 aa).

The active site involves Thr10. Residues Ala166, Cys169, and Ser172 each coordinate Na(+).

The protein belongs to the peptidase T1B family. HslV subfamily. In terms of assembly, a double ring-shaped homohexamer of HslV is capped on each side by a ring-shaped HslU homohexamer. The assembly of the HslU/HslV complex is dependent on binding of ATP.

The protein resides in the cytoplasm. The enzyme catalyses ATP-dependent cleavage of peptide bonds with broad specificity.. Its activity is regulated as follows. Allosterically activated by HslU binding. Protease subunit of a proteasome-like degradation complex believed to be a general protein degrading machinery. This chain is ATP-dependent protease subunit HslV, found in Rickettsia africae (strain ESF-5).